A 124-amino-acid polypeptide reads, in one-letter code: Small ribosomal subunit protein uS12 (124 aa).

D89 carries the 3-methylthioaspartic acid modification. The segment at 105–124 (QGVKNRGQARSRYGAKKEKK) is disordered. Residues 111-124 (GQARSRYGAKKEKK) are compositionally biased toward basic residues.

The protein belongs to the universal ribosomal protein uS12 family. As to quaternary structure, part of the 30S ribosomal subunit. Contacts proteins S8 and S17. May interact with IF1 in the 30S initiation complex.

In terms of biological role, with S4 and S5 plays an important role in translational accuracy. Interacts with and stabilizes bases of the 16S rRNA that are involved in tRNA selection in the A site and with the mRNA backbone. Located at the interface of the 30S and 50S subunits, it traverses the body of the 30S subunit contacting proteins on the other side and probably holding the rRNA structure together. The combined cluster of proteins S8, S12 and S17 appears to hold together the shoulder and platform of the 30S subunit. The polypeptide is Small ribosomal subunit protein uS12 (Micrococcus luteus (Micrococcus lysodeikticus)).